We begin with the raw amino-acid sequence, 53 residues long: UPF0391 membrane protein PSEEN0090 (53 aa).

Transmembrane regions (helical) follow at residues 4 to 24 (WAIT…GGIA) and 29 to 49 (GIAK…FFFG).

This sequence belongs to the UPF0391 family.

The protein resides in the cell membrane. The sequence is that of UPF0391 membrane protein PSEEN0090 from Pseudomonas entomophila (strain L48).